Reading from the N-terminus, the 233-residue chain is Riboflavin kinase (233 aa).

The H-T-H motif-like stretch occupies residues 1–104 (MVRDIKTFKF…YKKIFDDEGT (104 aa)). The interval 105-233 (IKIKGEVFSG…GDFVEVEVIL (129 aa)) is riboflavin kinase. 114–119 (GVGEGR) lines the CDP pocket. Mg(2+)-binding residues include T143 and N145. FMN contacts are provided by T200 and E208. 213 to 216 (VKLR) serves as a coordination point for CDP.

The protein belongs to the archaeal riboflavin kinase family. Mg(2+) is required as a cofactor.

It catalyses the reaction riboflavin + CTP = CDP + FMN + H(+). The protein operates within cofactor biosynthesis; FMN biosynthesis; FMN from riboflavin (CTP route): step 1/1. Functionally, catalyzes the CTP-dependent phosphorylation of riboflavin (vitamin B2) to form flavin mononucleotide (FMN). The chain is Riboflavin kinase (ribK) from Archaeoglobus fulgidus (strain ATCC 49558 / DSM 4304 / JCM 9628 / NBRC 100126 / VC-16).